The sequence spans 61 residues: Double gene block protein 2 (61 aa).

Topologically, residues 1–12 (MACCRCDSSPGD) are cytoplasmic. Residues 13-33 (YSGALLILFISFVFFYITSLS) traverse the membrane as a helical; Signal-anchor for type II membrane protein segment. Topologically, residues 34–61 (PQGNTYVHHFDSSSVKTQYVGISTNGDG) are lumenal.

This sequence belongs to the gammacarmovirus double gene block protein 2 family.

It is found in the host endoplasmic reticulum membrane. Functionally, cell-to-cell movement function. The chain is Double gene block protein 2 from Melon necrotic spot virus (MNSV).